The following is a 459-amino-acid chain: ATP-binding protein Uup-like (459 aa).

In terms of domain architecture, ABC transporter spans 132–350; it reads FEMEDVSYEI…QQANFWASKA (219 aa). ATP is bound at residue 164–171; the sequence is GPNGCGKT. Over residues 357–375 the composition is skewed to basic and acidic residues; the sequence is AKKSEPLKEESAVKNDRTS. Positions 357 to 381 are disordered; that stretch reads AKKSEPLKEESAVKNDRTSKPKSVK.

Belongs to the ABC transporter superfamily. ABCF family. Uup subfamily.

The protein resides in the cytoplasm. The enzyme catalyses ATP + H2O = ADP + phosphate + H(+). Might play a role in ribosome assembly or function; this is missing the first ABC transporter domain compared to paralogs. In Haemophilus influenzae (strain ATCC 51907 / DSM 11121 / KW20 / Rd), this protein is ATP-binding protein Uup-like (uup-B).